The sequence spans 538 residues: Putative cysteine ligase BshC (538 aa).

The stretch at 460 to 484 (KINEQIELLERMLKRNVEKKHEVEL) forms a coiled coil.

This sequence belongs to the BshC family.

Involved in bacillithiol (BSH) biosynthesis. May catalyze the last step of the pathway, the addition of cysteine to glucosamine malate (GlcN-Mal) to generate BSH. The chain is Putative cysteine ligase BshC from Bacillus cereus (strain AH820).